Here is a 3590-residue protein sequence, read N- to C-terminus: Filamentous hemagglutinin (3590 aa).

Disordered stretches follow at residues 3256 to 3309 (GGGS…VEVS) and 3417 to 3498 (APPP…GRHV). The span at 3289-3299 (PSRPTTPPASP) shows a compositional bias: pro residues. Residues 3300–3309 (QPIRATVEVS) are compositionally biased toward low complexity. A compositionally biased stretch (pro residues) spans 3417 to 3432 (APPPVVETAQPLPPVK).

The protein localises to the cell surface. Functionally, evidence for a role in host-cell binding and infection. This chain is Filamentous hemagglutinin (fhaB), found in Bordetella pertussis (strain Tohama I / ATCC BAA-589 / NCTC 13251).